The primary structure comprises 107 residues: Pathogenesis-related protein PR-4 (107 aa).

Residues 1 to 107 (QNINWDLRTA…VNYDFVDCGD (107 aa)) enclose the Barwin domain. 3 disulfides stabilise this stretch: cysteine 14-cysteine 46, cysteine 35-cysteine 69, and cysteine 49-cysteine 105.

Preferentially expressed in the tissue surrounding the abscission zone of fruitlets.

The protein localises to the secreted. Its subcellular location is the cell wall. Functionally, may be involved in protecting plant tissues from pathogen infection. The polypeptide is Pathogenesis-related protein PR-4 (Prunus persica (Peach)).